The following is a 383-amino-acid chain: MAKHLFTSESVSEGHPDKIADQISDAVLDAILAQDPKARVACETYVKTGMVLVGGEVTTSAWVDIEELTRKTVREIGYIHSDMGFDADSCAVLNAIGKQSPDINQGVDRADPKEQGAGDQGLMFGYASNETDILMPAPITYAHALVKRQSEVRKNGTLPWLRPDAKSQVTFAYEDNKIVGIDAIVLSTQHSPDIAQADLIEGVMETIIKPVLPAQWLNKDTKYFINPTGRFVIGGPMGDCGLTGRKIIVDTYGGMARHGGGAFSGKDPSKVDRSAAYAARYVAKNIVAAGLADRCEIQVSYAIGVAEPTSISVETFGTGKVSEEVLIKLVRQHFDLRPYGLTEMLNLARPIYQATAAYGHFGRSEFPWEATDKAEALRADAAL.

His15 serves as a coordination point for ATP. Asp17 provides a ligand contact to Mg(2+). Glu43 contacts K(+). Residues Glu56 and Gln99 each contribute to the L-methionine site. Residues 99–109 form a flexible loop region; it reads QSPDINQGVDR. ATP contacts are provided by residues 164 to 166, 230 to 231, Asp239, 245 to 246, Ala262, and Lys266; these read DAK, RF, and RK. Asp239 serves as a coordination point for L-methionine. Lys270 provides a ligand contact to L-methionine.

It belongs to the AdoMet synthase family. In terms of assembly, homotetramer; dimer of dimers. The cofactor is Mg(2+). It depends on K(+) as a cofactor.

It localises to the cytoplasm. The catalysed reaction is L-methionine + ATP + H2O = S-adenosyl-L-methionine + phosphate + diphosphate. It functions in the pathway amino-acid biosynthesis; S-adenosyl-L-methionine biosynthesis; S-adenosyl-L-methionine from L-methionine: step 1/1. Functionally, catalyzes the formation of S-adenosylmethionine (AdoMet) from methionine and ATP. The overall synthetic reaction is composed of two sequential steps, AdoMet formation and the subsequent tripolyphosphate hydrolysis which occurs prior to release of AdoMet from the enzyme. In Shewanella oneidensis (strain ATCC 700550 / JCM 31522 / CIP 106686 / LMG 19005 / NCIMB 14063 / MR-1), this protein is S-adenosylmethionine synthase.